A 137-amino-acid polypeptide reads, in one-letter code: Small ribosomal subunit protein uS11 (137 aa).

The interval 116–137 is disordered; the sequence is EDVTPIPHDGTRRPGGKRGRRV.

It belongs to the universal ribosomal protein uS11 family. As to quaternary structure, part of the 30S ribosomal subunit.

Functionally, located on the platform of the 30S subunit. The protein is Small ribosomal subunit protein uS11 of Methanopyrus kandleri (strain AV19 / DSM 6324 / JCM 9639 / NBRC 100938).